Here is a 95-residue protein sequence, read N- to C-terminus: MLKSNNASETATSKGVDKAAKKVFFRRRKGCPLSVPNAPVIDYKNPELLIKFVSEGGRMLPSRITNVCAKKQRKLNNAIKIARILALLPFVFQAK.

Belongs to the bacterial ribosomal protein bS18 family. Part of the 30S ribosomal subunit. Forms a tight heterodimer with protein bS6.

Binds as a heterodimer with protein bS6 to the central domain of the 16S rRNA, where it helps stabilize the platform of the 30S subunit. This chain is Small ribosomal subunit protein bS18, found in Rickettsia prowazekii (strain Madrid E).